The chain runs to 211 residues: Large ribosomal subunit protein bL25 (211 aa).

The disordered stretch occupies residues 185-211 (ESTTPAATEGEETEAAAAAPEPAAEDK). A compositionally biased stretch (low complexity) spans 199-211 (AAAAAPEPAAEDK).

This sequence belongs to the bacterial ribosomal protein bL25 family. CTC subfamily. As to quaternary structure, part of the 50S ribosomal subunit; part of the 5S rRNA/L5/L18/L25 subcomplex. Contacts the 5S rRNA. Binds to the 5S rRNA independently of L5 and L18.

This is one of the proteins that binds to the 5S RNA in the ribosome where it forms part of the central protuberance. The protein is Large ribosomal subunit protein bL25 of Treponema denticola (strain ATCC 35405 / DSM 14222 / CIP 103919 / JCM 8153 / KCTC 15104).